A 214-amino-acid polypeptide reads, in one-letter code: Cytochrome c biogenesis ATP-binding export protein CcmA (214 aa).

The region spanning 12 to 214 is the ABC transporter domain; the sequence is LAAHALAFSR…TRMLTLEAAA (203 aa). 44–51 contributes to the ATP binding site; the sequence is GDNGAGKT.

Belongs to the ABC transporter superfamily. CcmA exporter (TC 3.A.1.107) family. As to quaternary structure, the complex is composed of two ATP-binding proteins (CcmA) and two transmembrane proteins (CcmB).

The protein localises to the cell inner membrane. The enzyme catalyses heme b(in) + ATP + H2O = heme b(out) + ADP + phosphate + H(+). Functionally, part of the ABC transporter complex CcmAB involved in the biogenesis of c-type cytochromes; once thought to export heme, this seems not to be the case, but its exact role is uncertain. Responsible for energy coupling to the transport system. This chain is Cytochrome c biogenesis ATP-binding export protein CcmA, found in Xanthomonas oryzae pv. oryzae (strain MAFF 311018).